A 290-amino-acid chain; its full sequence is 4-hydroxybenzoate octaprenyltransferase (290 aa).

The next 7 membrane-spanning stretches (helical) occupy residues 33–53, 99–119, 141–161, 163–183, 213–233, 237–257, and 268–288; these read LWAL…AVFV, LFVV…TMTI, LPQV…FAAV, ESVP…AVAY, FIIG…GWLN, WGYY…QKLI, and AFMN…MSYW.

Belongs to the UbiA prenyltransferase family. Mg(2+) serves as cofactor.

Its subcellular location is the cell inner membrane. The catalysed reaction is all-trans-octaprenyl diphosphate + 4-hydroxybenzoate = 4-hydroxy-3-(all-trans-octaprenyl)benzoate + diphosphate. It participates in cofactor biosynthesis; ubiquinone biosynthesis. In terms of biological role, catalyzes the prenylation of para-hydroxybenzoate (PHB) with an all-trans polyprenyl group. Mediates the second step in the final reaction sequence of ubiquinone-8 (UQ-8) biosynthesis, which is the condensation of the polyisoprenoid side chain with PHB, generating the first membrane-bound Q intermediate 3-octaprenyl-4-hydroxybenzoate. This is 4-hydroxybenzoate octaprenyltransferase from Escherichia fergusonii (strain ATCC 35469 / DSM 13698 / CCUG 18766 / IAM 14443 / JCM 21226 / LMG 7866 / NBRC 102419 / NCTC 12128 / CDC 0568-73).